The primary structure comprises 651 residues: Cysteine-rich receptor-like protein kinase 42 (651 aa).

An N-terminal signal peptide occupies residues 1-28; that stretch reads MRCLTKTRSFHYVIIFYSFFFLPFLSSS. Residues 29–251 are Extracellular-facing; the sequence is SDDQRTTVSG…HHKFHVLFNK (223 aa). Gnk2-homologous domains are found at residues 35–135 and 137–236; these read TVSG…TYEF and DESV…DHKF. N79 and N151 each carry an N-linked (GlcNAc...) asparagine glycan. Residues 252–272 form a helical membrane-spanning segment; it reads GVIVAIVLTTSAFVMLILLAT. The Cytoplasmic portion of the chain corresponds to 273 to 651; it reads YVIMTKVSKT…SSESSTTRTI (379 aa). Positions 315–604 constitute a Protein kinase domain; it reads FSHKKMLGQG…IPSPTSPPFL (290 aa). Residues 321-329 and K343 each bind ATP; that span reads LGQGGNGTV. The residue at position 388 (Y388) is a Phosphotyrosine. D440 (proton acceptor) is an active-site residue. Residues S444 and S473 each carry the phosphoserine modification. Phosphothreonine is present on residues T474 and T479. The residue at position 487 (Y487) is a Phosphotyrosine.

It belongs to the protein kinase superfamily. Ser/Thr protein kinase family. CRK subfamily.

The protein resides in the membrane. It carries out the reaction L-seryl-[protein] + ATP = O-phospho-L-seryl-[protein] + ADP + H(+). It catalyses the reaction L-threonyl-[protein] + ATP = O-phospho-L-threonyl-[protein] + ADP + H(+). In Arabidopsis thaliana (Mouse-ear cress), this protein is Cysteine-rich receptor-like protein kinase 42 (CRK42).